Here is a 357-residue protein sequence, read N- to C-terminus: Actin, macronuclear (357 aa).

This sequence belongs to the actin family. In terms of processing, met-1 may be removed after translation.

Its subcellular location is the cytoplasm. The protein resides in the cytoskeleton. The catalysed reaction is ATP + H2O = ADP + phosphate + H(+). Functionally, actins are highly conserved proteins that are involved in various types of cell motility and are ubiquitously expressed in all eukaryotic cells. This Oxytricha fallax protein is Actin, macronuclear.